Consider the following 288-residue polypeptide: Ribosome biogenesis GTPase A (288 aa).

The 166-residue stretch at 14–179 (RRQVTEKLKL…LLDTPGILWP (166 aa)) folds into the CP-type G domain. Residues 58–61 (NKVD), 131–136 (NVGKST), and Gly-175 each bind GTP.

The protein belongs to the TRAFAC class YlqF/YawG GTPase family. MTG1 subfamily. Interacts with ctc. Interacts with the immature 50S ribosome subunit. 2 molecules of rbgA bind to one 50S subunit.

The protein resides in the cytoplasm. In terms of biological role, essential protein that is required for a late step of 50S ribosomal subunit assembly. Has GTPase activity that is stimulated by interaction with the immature 50S ribosome subunit. Binds to the 23S rRNA. Required for the association of ribosomal proteins rplP and rpmA with the large subunit. In Priestia megaterium (strain DSM 319 / IMG 1521) (Bacillus megaterium), this protein is Ribosome biogenesis GTPase A.